A 150-amino-acid polypeptide reads, in one-letter code: Large ribosomal subunit protein uL15 (150 aa).

The segment at 1-55 (MADNEILQMHDLKPAPGAKKDRTRVGRGEGSKGKTSGRGAKGQTKRNHVRPGFEG) is disordered. The segment covering 8-32 (QMHDLKPAPGAKKDRTRVGRGEGSK) has biased composition (basic and acidic residues).

This sequence belongs to the universal ribosomal protein uL15 family. As to quaternary structure, part of the 50S ribosomal subunit.

Binds to the 23S rRNA. In Bifidobacterium longum (strain NCC 2705), this protein is Large ribosomal subunit protein uL15.